The chain runs to 328 residues: Gonadotropin-releasing hormone receptor (328 aa).

The Extracellular portion of the chain corresponds to 1-38 (MANGDSPDQNENHCSAINSSILLTPGSLPTLTLSGKIR). An N-linked (GlcNAc...) asparagine glycan is attached at Asn18. The chain crosses the membrane as a helical span at residues 39-58 (VTVTFFLFLLSTIFNTSFLL). Topologically, residues 59-77 (KLQNWTQRKEKRKKLSKMK) are cytoplasmic. A helical transmembrane segment spans residues 78–97 (VLLKHLTLANLLETLIVMPL). Topologically, residues 98–115 (DGMWNITVQWYAGELLCK) are extracellular. A glycan (N-linked (GlcNAc...) asparagine) is linked at Asn102. Cysteines 114 and 196 form a disulfide. The helical transmembrane segment at 116–137 (VLSYLKLFSMYAPAFMMVVISL) threads the bilayer. At 138 to 164 (DRSLAITRPLAVKSNSKLGQFMIGLAW) the chain is on the cytoplasmic side. A helical transmembrane segment spans residues 165–184 (LLSSIFAGPQLYIFGMIHLA). At 185–212 (DDSGQTEGFSQCVTHCSFPQWWHQAFYN) the chain is on the extracellular side. Residues 213–232 (FFTFSCLFIIPLLIMLICNA) form a helical membrane-spanning segment. Residues 233-281 (KIIFTLTRVLHQDPHKLQLNQSKNNIPQARLRTLKMTVAFATSFTVCWT) lie on the Cytoplasmic side of the membrane. Residues 282–300 (PYYVLGIWYWFDPDMVNRV) form a helical membrane-spanning segment. The Extracellular segment spans residues 301–306 (SDPVNH). Residues 307–326 (FFFLFAFLNPCFDPLIYGYF) traverse the membrane as a helical segment. At 327–328 (SL) the chain is on the cytoplasmic side.

It belongs to the G-protein coupled receptor 1 family.

It localises to the cell membrane. In terms of biological role, receptor for gonadotropin releasing hormone (GnRH) that mediates the action of GnRH to stimulate the secretion of the gonadotropic hormones luteinizing hormone (LH) and follicle-stimulating hormone (FSH). This receptor mediates its action by association with G-proteins that activate a phosphatidylinositol-calcium second messenger system. This chain is Gonadotropin-releasing hormone receptor (GNRHR), found in Ovis aries (Sheep).